Here is a 404-residue protein sequence, read N- to C-terminus: Multidrug resistance protein MdtG (404 aa).

11 consecutive transmembrane segments (helical) span residues 19–39 (LGCFLTGAAFSLVMPFLPLYV), 56–76 (LVFSITFLFSAIASPFWGGLA), 90–110 (LGMAIVMLLMGMAQNIWQFLI), 113–133 (ALLGLLGGFIPNANALIATQV), 144–164 (TLSTGGVSGALLGPLAGGLLA), 171–191 (PVFFITASVLFICFLLTFFFI), 222–242 (LFVTTLIIQVATGSIAPILTL), 254–274 (IAFISGMIASVPGVAALLSAP), 288–308 (ILIVALIISVLLLIPMSFVQT), 317–337 (FLLGAADGALLPAVQTLLVYN), and 376–396 (AVFCVTAGVVLFNAIYSWNSL).

It belongs to the major facilitator superfamily. DHA1 family. MdtG (TC 2.A.1.2.20) subfamily.

The protein resides in the cell inner membrane. The protein is Multidrug resistance protein MdtG of Salmonella arizonae (strain ATCC BAA-731 / CDC346-86 / RSK2980).